Reading from the N-terminus, the 1341-residue chain is DNA-directed RNA polymerase subunit beta (1341 aa).

It belongs to the RNA polymerase beta chain family. The RNAP catalytic core consists of 2 alpha, 1 beta, 1 beta' and 1 omega subunit. When a sigma factor is associated with the core the holoenzyme is formed, which can initiate transcription.

The catalysed reaction is RNA(n) + a ribonucleoside 5'-triphosphate = RNA(n+1) + diphosphate. In terms of biological role, DNA-dependent RNA polymerase catalyzes the transcription of DNA into RNA using the four ribonucleoside triphosphates as substrates. The polypeptide is DNA-directed RNA polymerase subunit beta (Photobacterium profundum (strain SS9)).